Consider the following 376-residue polypeptide: Thymidine kinase (376 aa).

The tract at residues Met1 to Pro47 is disordered. An ATP-binding site is contributed by Gly56–Thr63. Glu84 serves as the catalytic Proton acceptor. Substrate contacts are provided by Tyr102 and Gln126. Arg217 contacts ATP. Arg223 serves as a coordination point for substrate.

The protein belongs to the herpesviridae thymidine kinase family. As to quaternary structure, homodimer.

It catalyses the reaction thymidine + ATP = dTMP + ADP + H(+). Functionally, catalyzes the transfer of the gamma-phospho group of ATP to thymidine to generate dTMP in the salvage pathway of pyrimidine synthesis. The dTMP serves as a substrate for DNA polymerase during viral DNA replication. Allows the virus to be reactivated and to grow in non-proliferative cells lacking a high concentration of phosphorylated nucleic acid precursors. The sequence is that of Thymidine kinase from Human herpesvirus 2 (strain 333) (HHV-2).